Consider the following 47-residue polypeptide: Large ribosomal subunit protein bL34 (47 aa).

Residues 1–28 (MAKGKRTFQPNNRRRARVHGFRTRMRTR) are disordered.

The protein belongs to the bacterial ribosomal protein bL34 family.

This Corynebacterium efficiens (strain DSM 44549 / YS-314 / AJ 12310 / JCM 11189 / NBRC 100395) protein is Large ribosomal subunit protein bL34.